Consider the following 423-residue polypeptide: Gamma-glutamyl phosphate reductase (423 aa).

Belongs to the gamma-glutamyl phosphate reductase family.

The protein localises to the cytoplasm. It carries out the reaction L-glutamate 5-semialdehyde + phosphate + NADP(+) = L-glutamyl 5-phosphate + NADPH + H(+). The protein operates within amino-acid biosynthesis; L-proline biosynthesis; L-glutamate 5-semialdehyde from L-glutamate: step 2/2. Its function is as follows. Catalyzes the NADPH-dependent reduction of L-glutamate 5-phosphate into L-glutamate 5-semialdehyde and phosphate. The product spontaneously undergoes cyclization to form 1-pyrroline-5-carboxylate. The protein is Gamma-glutamyl phosphate reductase of Pseudomonas putida (strain W619).